The primary structure comprises 107 residues: Phosphoribosyl-ATP pyrophosphatase (107 aa).

It belongs to the PRA-PH family.

It localises to the cytoplasm. It catalyses the reaction 1-(5-phospho-beta-D-ribosyl)-ATP + H2O = 1-(5-phospho-beta-D-ribosyl)-5'-AMP + diphosphate + H(+). It participates in amino-acid biosynthesis; L-histidine biosynthesis; L-histidine from 5-phospho-alpha-D-ribose 1-diphosphate: step 2/9. The sequence is that of Phosphoribosyl-ATP pyrophosphatase from Brucella abortus (strain S19).